The chain runs to 132 residues: Photosystem II extrinsic protein U (132 aa).

Residues 1-29 form the signal peptide; that stretch reads MKRLLSWLTGALVMAGLLSSLVLPSAVYA.

Belongs to the PsbU family. PSII is composed of 1 copy each of membrane proteins PsbA, PsbB, PsbC, PsbD, PsbE, PsbF, PsbH, PsbI, PsbJ, PsbK, PsbL, PsbM, PsbT, PsbX, PsbY, PsbZ, Psb30/Ycf12, peripheral proteins PsbO, CyanoQ (PsbQ), PsbU, PsbV and a large number of cofactors. It forms dimeric complexes.

Its subcellular location is the cellular thylakoid membrane. One of the extrinsic, lumenal subunits of photosystem II (PSII). PSII is a light-driven water plastoquinone oxidoreductase, using light energy to abstract electrons from H(2)O, generating a proton gradient subsequently used for ATP formation. The extrinsic proteins stabilize the structure of photosystem II oxygen-evolving complex (OEC), the ion environment of oxygen evolution and protect the OEC against heat-induced inactivation. This Synechococcus sp. (strain CC9902) protein is Photosystem II extrinsic protein U.